The primary structure comprises 317 residues: Aspartate carbamoyltransferase catalytic subunit (317 aa).

2 residues coordinate carbamoyl phosphate: Arg-66 and Thr-67. Lys-94 is an L-aspartate binding site. Residues Arg-116, His-144, and Gln-147 each coordinate carbamoyl phosphate. 2 residues coordinate L-aspartate: Arg-177 and Arg-231. 2 residues coordinate carbamoyl phosphate: Gly-272 and Pro-273.

It belongs to the aspartate/ornithine carbamoyltransferase superfamily. ATCase family. In terms of assembly, heterododecamer (2C3:3R2) of six catalytic PyrB chains organized as two trimers (C3), and six regulatory PyrI chains organized as three dimers (R2).

It catalyses the reaction carbamoyl phosphate + L-aspartate = N-carbamoyl-L-aspartate + phosphate + H(+). The protein operates within pyrimidine metabolism; UMP biosynthesis via de novo pathway; (S)-dihydroorotate from bicarbonate: step 2/3. Functionally, catalyzes the condensation of carbamoyl phosphate and aspartate to form carbamoyl aspartate and inorganic phosphate, the committed step in the de novo pyrimidine nucleotide biosynthesis pathway. This chain is Aspartate carbamoyltransferase catalytic subunit, found in Beijerinckia indica subsp. indica (strain ATCC 9039 / DSM 1715 / NCIMB 8712).